The primary structure comprises 160 residues: Heat shock protein beta-6 (160 aa).

The interval 1-72 (MEIPVPVQPS…PVAQVPTDPG (72 aa)) is involved in stabilization of the HSPB1:HSBP6 heterodimer. Serine 16 carries the phosphoserine; by PKA modification. Residues 55–160 (LRAPSVALPV…AQAPPPAAAK (106 aa)) form the sHSP domain. Deamidated glutamine is present on glutamine 66.

The protein belongs to the small heat shock protein (HSP20) family. Homodimer. Small heat shock proteins form high molecular mass oligomers containing variable number of monomers; these oligomers display a very flexible quaternary structure easily exchanging their subunits. Heterooligomer with HSPB1; formed through oligomerization of HSPB1:HSBP6 dimers; subunit exchange leads to formation of at least two different heterooligomeric complexes, differing in variable quantities of HSPB1 and HSPB6 homodimers in addition to HSPB1:HSPB6 heterodimers. Heterooligomer with CRYAB; large heterooligomers consist of CRYAB homodimers and HSPB5:HSPB6 heterodimers but lacking HSPB6 homodimers. Interacts with BAG3. Interacts (phosphorylated) with YWHAZ. Interacts with PDE4A and PDE4D; required for maintenance of the non-phosphorylated state of HSPB6 under basal conditions. Interacts with KDR. Interacts with PRKD1. In terms of processing, the N-terminus is blocked. Phosphorylated at Ser-16 by PKA and probably PKD1K; required to protect cardiomyocytes from apoptosis.

It is found in the cytoplasm. It localises to the nucleus. The protein localises to the secreted. Small heat shock protein which functions as a molecular chaperone probably maintaining denatured proteins in a folding-competent state. Seems to have versatile functions in various biological processes. Plays a role in regulating muscle function such as smooth muscle vasorelaxation and cardiac myocyte contractility. May regulate myocardial angiogenesis implicating KDR. Overexpression mediates cardioprotection and angiogenesis after induced damage. Stabilizes monomeric YWHAZ thereby supporting YWHAZ chaperone-like activity. This chain is Heat shock protein beta-6 (HSPB6), found in Homo sapiens (Human).